The chain runs to 403 residues: F-box only protein 22 (403 aa).

M1 carries the post-translational modification N-acetylmethionine. Positions 19–71 (STFVLSNLAEVVERVLTFLPAKALLRVACVCRLWRECVRRVLRTHRSVTWISA) constitute an F-box domain. S128 bears the Phosphoserine mark. At K194 the chain carries N6-acetyllysine.

Directly interacts with SKP1 and CUL1.

Its subcellular location is the cytoplasm. It localises to the myofibril. It is found in the sarcomere. The protein localises to the z line. In terms of biological role, substrate-recognition component of the SCF (SKP1-CUL1-F-box protein)-type E3 ubiquitin ligase complex. Promotes the proteasome-dependent degradation of key sarcomeric proteins, such as alpha-actinin (ACTN2) and filamin-C (FLNC), essential for maintenance of normal contractile function. The sequence is that of F-box only protein 22 (FBXO22) from Pongo abelii (Sumatran orangutan).